Reading from the N-terminus, the 181-residue chain is uncharacterized protein (181 aa).

The interval 25–47 (ELANEVSAGDEEPYDDDIWESED) is disordered. A compositionally biased stretch (acidic residues) spans 32–47 (AGDEEPYDDDIWESED). The chain crosses the membrane as a helical span at residues 149 to 169 (ILTLILLSCGLLMLFIGYPIL).

It is found in the cytoplasm. It localises to the membrane. This is an uncharacterized protein from Schizosaccharomyces pombe (strain 972 / ATCC 24843) (Fission yeast).